A 118-amino-acid chain; its full sequence is Beta-2-microglobulin (118 aa).

Residues 1 to 20 (MARFVALVLLGLLSLSGLDA) form the signal peptide. In terms of domain architecture, Ig-like C1-type spans 25–112 (PKIQVYSRHP…HVTLEQPRIV (88 aa)). A disulfide bridge connects residues Cys-45 and Cys-99.

It belongs to the beta-2-microglobulin family. Heterodimer of an alpha chain and a beta chain. Beta-2-microglobulin is the beta-chain of major histocompatibility complex class I molecules. Forms a heterotrimer with MR1 and a metabolite antigen.

Its subcellular location is the secreted. Component of the class I major histocompatibility complex (MHC). Involved in the presentation of peptide antigens to the immune system. The protein is Beta-2-microglobulin (B2M) of Bos taurus (Bovine).